The primary structure comprises 182 residues: Vomeronasal secretory protein 1 (182 aa).

The first 18 residues, 1-18, serve as a signal peptide directing secretion; it reads MRALLLIISFCLVAVLQA. Asn-30 carries an N-linked (GlcNAc...) asparagine glycan. Cys-76 and Cys-168 are disulfide-bonded.

This sequence belongs to the calycin superfamily. Lipocalin family. Specifically expressed in vomeronasal and posterior glands of the nasal septum, the ducts of which open into the lumen of the vomeronasal organ.

It localises to the secreted. Functionally, transport of lipophilic molecules, possible pheromone-carrier. In Mus musculus (Mouse), this protein is Vomeronasal secretory protein 1 (Lcn3).